A 383-amino-acid polypeptide reads, in one-letter code: MTAPAELSPTLQLACDLIRRPSVTPVDADCQAQMMNRLGAVGFELEPMRIEDVDNFWATHGSQDGPVLCFAGHTDVVPTGPVQQWQHEPFEALIDADGMLCGRGAADMKGSLASMVIASERFVQDYPNHRGKVAFLITSDEEGPAHHGTKAVVERLKARNERLDWCIVGEPSSTTLLGDVVKNGRRGSLGAKLTVRGKQGHVAYPHLARNPIHLAAPALAELAAEHWDEGNAFFPPTSFQISNLNSGTGATNVVPGELTALFNFRFSTESTVEGLQARVSAILDKHELDWSIDWALSGLPFLTEPGELLDAVASSIKGVTGRDTQPSTSGGTSDGRFIATMGTQVVELGPVNATIHQVDERILASDLDLLTEIYYQTLVRLLA.

Residue H73 coordinates Zn(2+). Residue D75 is part of the active site. D107 contributes to the Zn(2+) binding site. Catalysis depends on E141, which acts as the Proton acceptor. Residues E142, E170, and H356 each contribute to the Zn(2+) site.

The protein belongs to the peptidase M20A family. DapE subfamily. As to quaternary structure, homodimer. Zn(2+) serves as cofactor. Requires Co(2+) as cofactor.

The enzyme catalyses N-succinyl-(2S,6S)-2,6-diaminopimelate + H2O = (2S,6S)-2,6-diaminopimelate + succinate. It functions in the pathway amino-acid biosynthesis; L-lysine biosynthesis via DAP pathway; LL-2,6-diaminopimelate from (S)-tetrahydrodipicolinate (succinylase route): step 3/3. In terms of biological role, catalyzes the hydrolysis of N-succinyl-L,L-diaminopimelic acid (SDAP), forming succinate and LL-2,6-diaminopimelate (DAP), an intermediate involved in the bacterial biosynthesis of lysine and meso-diaminopimelic acid, an essential component of bacterial cell walls. The protein is Succinyl-diaminopimelate desuccinylase of Pseudomonas putida (strain GB-1).